A 356-amino-acid polypeptide reads, in one-letter code: S-adenosylmethionine:tRNA ribosyltransferase-isomerase (356 aa).

The protein belongs to the QueA family. Monomer.

It localises to the cytoplasm. It carries out the reaction 7-aminomethyl-7-carbaguanosine(34) in tRNA + S-adenosyl-L-methionine = epoxyqueuosine(34) in tRNA + adenine + L-methionine + 2 H(+). Its pathway is tRNA modification; tRNA-queuosine biosynthesis. Functionally, transfers and isomerizes the ribose moiety from AdoMet to the 7-aminomethyl group of 7-deazaguanine (preQ1-tRNA) to give epoxyqueuosine (oQ-tRNA). This is S-adenosylmethionine:tRNA ribosyltransferase-isomerase from Escherichia coli O8 (strain IAI1).